Reading from the N-terminus, the 613-residue chain is Cilia- and flagella-associated protein 100 (613 aa).

The disordered stretch occupies residues 36-55 (KSKESKKNKGNVTISDRSSN). The span at 45 to 55 (GNVTISDRSSN) shows a compositional bias: polar residues. 4 coiled-coil regions span residues 167–198 (ALAMKRNEIQRLEMLATREENRLERAEKFLEK), 233–260 (VEIRELTAQITSIKSEISKFEDTLKHYK), 396–435 (FTKLEEENLSLIQNTQEMEETLDELNVTLKNTQIRMDKEV), and 504–580 (GTVQ…RGRK).

It belongs to the CFAP100 family.

It is found in the cytoplasm. It localises to the cytoskeleton. The protein resides in the cilium axoneme. Its function is as follows. May play a role in ciliary/flagellar motility by regulating the assembly and the activity of axonemal inner dynein arm. The sequence is that of Cilia- and flagella-associated protein 100 from Mus musculus (Mouse).